Consider the following 108-residue polypeptide: BH3-like motif-containing cell death inducer (108 aa).

Residues 5-12 (LPIEGQEI) carry the BH3-like motif.

As to expression, ubiquitously expressed.

The protein resides in the cytoplasm. It localises to the mitochondrion. Functionally, functions as a proapoptotic molecule through the caspase-dependent mitochondrial pathway of cell death. This is BH3-like motif-containing cell death inducer (BLID) from Homo sapiens (Human).